A 454-amino-acid polypeptide reads, in one-letter code: Ribosomal protein uS12 methylthiotransferase RimO (454 aa).

In terms of domain architecture, MTTase N-terminal spans 14–125 (SKVAFSHVGC…IAKVLDRVEK (112 aa)). [4Fe-4S] cluster-binding residues include Cys-23, Cys-59, Cys-88, Cys-163, Cys-167, and Cys-170. Positions 149 to 378 (DKNKFVAYLR…ISVQQNISKD (230 aa)) constitute a Radical SAM core domain. Residues 381-452 (QSYVGSKMKI…EYDLYGETLK (72 aa)) form the TRAM domain.

The protein belongs to the methylthiotransferase family. RimO subfamily. [4Fe-4S] cluster serves as cofactor.

It is found in the cytoplasm. It carries out the reaction L-aspartate(89)-[ribosomal protein uS12]-hydrogen + (sulfur carrier)-SH + AH2 + 2 S-adenosyl-L-methionine = 3-methylsulfanyl-L-aspartate(89)-[ribosomal protein uS12]-hydrogen + (sulfur carrier)-H + 5'-deoxyadenosine + L-methionine + A + S-adenosyl-L-homocysteine + 2 H(+). Functionally, catalyzes the methylthiolation of an aspartic acid residue of ribosomal protein uS12. This chain is Ribosomal protein uS12 methylthiotransferase RimO, found in Prochlorococcus marinus (strain MIT 9215).